Consider the following 156-residue polypeptide: Ribosomal RNA large subunit methyltransferase H (156 aa).

Residues L72, G104, and 123 to 128 each bind S-adenosyl-L-methionine; that span reads FGAMVW.

Belongs to the RNA methyltransferase RlmH family. In terms of assembly, homodimer.

The protein resides in the cytoplasm. The enzyme catalyses pseudouridine(1915) in 23S rRNA + S-adenosyl-L-methionine = N(3)-methylpseudouridine(1915) in 23S rRNA + S-adenosyl-L-homocysteine + H(+). In terms of biological role, specifically methylates the pseudouridine at position 1915 (m3Psi1915) in 23S rRNA. This Ruegeria pomeroyi (strain ATCC 700808 / DSM 15171 / DSS-3) (Silicibacter pomeroyi) protein is Ribosomal RNA large subunit methyltransferase H.